The sequence spans 381 residues: Putative glutamate--cysteine ligase 2 (381 aa).

This sequence belongs to the glutamate--cysteine ligase type 2 family. YbdK subfamily.

It carries out the reaction L-cysteine + L-glutamate + ATP = gamma-L-glutamyl-L-cysteine + ADP + phosphate + H(+). In terms of biological role, ATP-dependent carboxylate-amine ligase which exhibits weak glutamate--cysteine ligase activity. This is Putative glutamate--cysteine ligase 2 from Polaromonas naphthalenivorans (strain CJ2).